Reading from the N-terminus, the 198-residue chain is Small ribosomal subunit protein uS4 (198 aa).

The region spanning 90 to 152 (TRLDNLVLRA…SRSNELFKEN (63 aa)) is the S4 RNA-binding domain.

Belongs to the universal ribosomal protein uS4 family. As to quaternary structure, part of the 30S ribosomal subunit. Contacts protein S5. The interaction surface between S4 and S5 is involved in control of translational fidelity.

In terms of biological role, one of the primary rRNA binding proteins, it binds directly to 16S rRNA where it nucleates assembly of the body of the 30S subunit. Functionally, with S5 and S12 plays an important role in translational accuracy. The protein is Small ribosomal subunit protein uS4 of Finegoldia magna (strain ATCC 29328 / DSM 20472 / WAL 2508) (Peptostreptococcus magnus).